Reading from the N-terminus, the 269-residue chain is Small ribosomal subunit protein uS2 (269 aa).

The segment at 228 to 269 (ARAERQAAAAKDAAGDTGKSEADAEAVKAEAAAEEKAETTEA) is disordered. Residues 233–244 (QAAAAKDAAGDT) show a composition bias toward low complexity. A compositionally biased stretch (basic and acidic residues) spans 245–269 (GKSEADAEAVKAEAAAEEKAETTEA).

This sequence belongs to the universal ribosomal protein uS2 family.

The protein is Small ribosomal subunit protein uS2 of Corynebacterium urealyticum (strain ATCC 43042 / DSM 7109).